Here is a 302-residue protein sequence, read N- to C-terminus: N-acetyl-D-glucosamine kinase (302 aa).

ATP contacts are provided by residues 4–11 (GFDVGGTK) and 133–140 (GFGGGLVY). His-157, Cys-177, Cys-179, and Cys-184 together coordinate Zn(2+).

Belongs to the ROK (NagC/XylR) family. NagK subfamily.

The enzyme catalyses N-acetyl-D-glucosamine + ATP = N-acetyl-D-glucosamine 6-phosphate + ADP + H(+). Its pathway is cell wall biogenesis; peptidoglycan recycling. Catalyzes the phosphorylation of N-acetyl-D-glucosamine (GlcNAc) derived from cell-wall degradation, yielding GlcNAc-6-P. In Vibrio cholerae serotype O1 (strain ATCC 39315 / El Tor Inaba N16961), this protein is N-acetyl-D-glucosamine kinase.